The following is a 429-amino-acid chain: 3-isopropylmalate dehydratase large subunit (429 aa).

Positions 303, 363, and 366 each coordinate [4Fe-4S] cluster.

It belongs to the aconitase/IPM isomerase family. LeuC type 2 subfamily. Heterodimer of LeuC and LeuD. [4Fe-4S] cluster serves as cofactor.

The catalysed reaction is (2R,3S)-3-isopropylmalate = (2S)-2-isopropylmalate. Its pathway is amino-acid biosynthesis; L-leucine biosynthesis; L-leucine from 3-methyl-2-oxobutanoate: step 2/4. Catalyzes the isomerization between 2-isopropylmalate and 3-isopropylmalate, via the formation of 2-isopropylmaleate. The polypeptide is 3-isopropylmalate dehydratase large subunit (Caldicellulosiruptor bescii (strain ATCC BAA-1888 / DSM 6725 / KCTC 15123 / Z-1320) (Anaerocellum thermophilum)).